We begin with the raw amino-acid sequence, 591 residues long: DNA ligase (591 aa).

NAD(+) is bound by residues 38 to 42 (DEKYD), 87 to 88 (SL), and Glu-119. The active-site N6-AMP-lysine intermediate is Lys-121. Positions 142, 181, 298, and 322 each coordinate NAD(+). 4 residues coordinate Zn(2+): Cys-415, Cys-418, Cys-433, and Cys-439.

This sequence belongs to the NAD-dependent DNA ligase family. LigA subfamily. The cofactor is Mg(2+). It depends on Mn(2+) as a cofactor.

The catalysed reaction is NAD(+) + (deoxyribonucleotide)n-3'-hydroxyl + 5'-phospho-(deoxyribonucleotide)m = (deoxyribonucleotide)n+m + AMP + beta-nicotinamide D-nucleotide.. Its function is as follows. DNA ligase that catalyzes the formation of phosphodiester linkages between 5'-phosphoryl and 3'-hydroxyl groups in double-stranded DNA using NAD as a coenzyme and as the energy source for the reaction. It is essential for DNA replication and repair of damaged DNA. In Wigglesworthia glossinidia brevipalpis, this protein is DNA ligase.